The following is a 183-amino-acid chain: Large ribosomal subunit protein bL32m (183 aa).

A mitochondrion-targeting transit peptide spans 1–71; that stretch reads MNSLIFGKQL…DFFSNNGILL (71 aa). Zn(2+)-binding residues include Cys-104, Cys-107, Cys-117, and Cys-120.

It belongs to the bacterial ribosomal protein bL32 family. In terms of assembly, component of the mitochondrial large ribosomal subunit (mt-LSU). Mature yeast 74S mitochondrial ribosomes consist of a small (37S) and a large (54S) subunit. The 37S small subunit contains a 15S ribosomal RNA (15S mt-rRNA) and 34 different proteins. The 54S large subunit contains a 21S rRNA (21S mt-rRNA) and 46 different proteins. bL32m has a zinc binding site. In terms of processing, MRPL32 precursor is processed by the m-AAA protease (composed of YTA12/RCA1 and YTA10/AFG3), which cleaves the N-terminal transit peptide. Cleavage by the m-AAA protease takes place prior to assembly into the large subunit, an essential step for mitochondrial ribosome (mitoribosome) assembly. Proper processing by the m-AAA protease is dependent on the zinc-binding region within the tightly folded C-terminal domain of MRPL32: zinc-dependent folding halts degradation initiated from the N-terminus and triggers the release of mature MRPL32.

It localises to the mitochondrion. Component of the mitochondrial ribosome (mitoribosome), a dedicated translation machinery responsible for the synthesis of mitochondrial genome-encoded proteins, including at least some of the essential transmembrane subunits of the mitochondrial respiratory chain. The mitoribosomes are attached to the mitochondrial inner membrane and translation products are cotranslationally integrated into the membrane. The chain is Large ribosomal subunit protein bL32m from Saccharomyces cerevisiae (strain ATCC 204508 / S288c) (Baker's yeast).